Consider the following 142-residue polypeptide: Coactosin-like protein (142 aa).

Residue Ala-2 is modified to N-acetylalanine. One can recognise an ADF-H domain in the interval 2–130 (ATKIDKEACR…EEDFIKNELK (129 aa)). The interval 66-75 (TGDAMSKRSK) is flexible and important for F-actin binding. An N6-acetyllysine mark is found at Lys-102 and Lys-126.

The protein belongs to the actin-binding proteins ADF family. Coactosin subfamily. Interacts with 5-lipoxygenase (ALOX5/5LO) in a calcium-independent manner. Binds to F-actin with a stoichiometry of 1:2.

It localises to the cytoplasm. The protein localises to the cytoskeleton. Its subcellular location is the nucleus. In terms of biological role, binds to F-actin in a calcium-independent manner. Has no direct effect on actin depolymerization. Acts as a chaperone for ALOX5 (5LO), influencing both its stability and activity in leukotrienes synthesis. This chain is Coactosin-like protein (COTL1), found in Bos taurus (Bovine).